The primary structure comprises 378 residues: Erythronate-4-phosphate dehydrogenase (378 aa).

The substrate site is built by Ser45 and Thr66. NAD(+) contacts are provided by Asp146 and Thr175. The active site involves Arg208. Asp232 is an NAD(+) binding site. Glu237 is a catalytic residue. Residue His254 is the Proton donor of the active site. Gly257 contacts NAD(+). Tyr258 is a substrate binding site.

The protein belongs to the D-isomer specific 2-hydroxyacid dehydrogenase family. PdxB subfamily. In terms of assembly, homodimer.

The protein localises to the cytoplasm. The enzyme catalyses 4-phospho-D-erythronate + NAD(+) = (R)-3-hydroxy-2-oxo-4-phosphooxybutanoate + NADH + H(+). It participates in cofactor biosynthesis; pyridoxine 5'-phosphate biosynthesis; pyridoxine 5'-phosphate from D-erythrose 4-phosphate: step 2/5. Functionally, catalyzes the oxidation of erythronate-4-phosphate to 3-hydroxy-2-oxo-4-phosphonooxybutanoate. The protein is Erythronate-4-phosphate dehydrogenase of Shigella flexneri serotype 5b (strain 8401).